A 230-amino-acid polypeptide reads, in one-letter code: A-type ATP synthase subunit D (230 aa).

The interval 204–230 (AKKEEEEDALAAEEEAEEEPEAVTADD) is disordered. Residues 208-230 (EEEDALAAEEEAEEEPEAVTADD) show a composition bias toward acidic residues.

It belongs to the V-ATPase D subunit family. As to quaternary structure, has multiple subunits with at least A(3), B(3), C, D, E, F, H, I and proteolipid K(x).

The protein localises to the cell membrane. Component of the A-type ATP synthase that produces ATP from ADP in the presence of a proton gradient across the membrane. The polypeptide is A-type ATP synthase subunit D (Haloarcula marismortui (strain ATCC 43049 / DSM 3752 / JCM 8966 / VKM B-1809) (Halobacterium marismortui)).